The primary structure comprises 258 residues: Type III pantothenate kinase (258 aa).

6–13 (DVGNTNTV) lines the ATP pocket. Residues Tyr100 and 107–110 (GADR) each bind substrate. Asp109 functions as the Proton acceptor in the catalytic mechanism. Asp129 serves as a coordination point for K(+). Thr132 provides a ligand contact to ATP. Thr184 provides a ligand contact to substrate.

It belongs to the type III pantothenate kinase family. Homodimer. NH4(+) is required as a cofactor. K(+) serves as cofactor.

Its subcellular location is the cytoplasm. It carries out the reaction (R)-pantothenate + ATP = (R)-4'-phosphopantothenate + ADP + H(+). The protein operates within cofactor biosynthesis; coenzyme A biosynthesis; CoA from (R)-pantothenate: step 1/5. Its function is as follows. Catalyzes the phosphorylation of pantothenate (Pan), the first step in CoA biosynthesis. In Geobacillus kaustophilus (strain HTA426), this protein is Type III pantothenate kinase.